The sequence spans 658 residues: UvrABC system protein C (658 aa).

One can recognise a GIY-YIG domain in the interval 62–140 (PKPGVYRMLD…IKRFRPPYNV (79 aa)). A UVR domain is found at 250-285 (GAVQREIEAQMHKAAEDLDFERAAMLRDRLRAATFI).

The protein belongs to the UvrC family. In terms of assembly, interacts with UvrB in an incision complex.

The protein localises to the cytoplasm. Its function is as follows. The UvrABC repair system catalyzes the recognition and processing of DNA lesions. UvrC both incises the 5' and 3' sides of the lesion. The N-terminal half is responsible for the 3' incision and the C-terminal half is responsible for the 5' incision. This is UvrABC system protein C from Novosphingobium aromaticivorans (strain ATCC 700278 / DSM 12444 / CCUG 56034 / CIP 105152 / NBRC 16084 / F199).